The sequence spans 432 residues: 3-phosphoshikimate 1-carboxyvinyltransferase (432 aa).

3-phosphoshikimate is bound by residues lysine 23, serine 24, and arginine 28. Residue lysine 23 coordinates phosphoenolpyruvate. Phosphoenolpyruvate is bound by residues glycine 95 and arginine 123. 3-phosphoshikimate contacts are provided by serine 166, glutamine 168, aspartate 315, and lysine 342. Glutamine 168 provides a ligand contact to phosphoenolpyruvate. The active-site Proton acceptor is aspartate 315. Positions 346 and 390 each coordinate phosphoenolpyruvate.

The protein belongs to the EPSP synthase family. As to quaternary structure, monomer.

It is found in the cytoplasm. It carries out the reaction 3-phosphoshikimate + phosphoenolpyruvate = 5-O-(1-carboxyvinyl)-3-phosphoshikimate + phosphate. The protein operates within metabolic intermediate biosynthesis; chorismate biosynthesis; chorismate from D-erythrose 4-phosphate and phosphoenolpyruvate: step 6/7. Functionally, catalyzes the transfer of the enolpyruvyl moiety of phosphoenolpyruvate (PEP) to the 5-hydroxyl of shikimate-3-phosphate (S3P) to produce enolpyruvyl shikimate-3-phosphate and inorganic phosphate. The chain is 3-phosphoshikimate 1-carboxyvinyltransferase from Lactiplantibacillus plantarum (strain ATCC BAA-793 / NCIMB 8826 / WCFS1) (Lactobacillus plantarum).